We begin with the raw amino-acid sequence, 219 residues long: Glutamine transport system permease protein GlnP (219 aa).

Over 1–22 the chain is Periplasmic; it reads MQFDWSAIWPAIPLLIEGAKMT. In terms of domain architecture, ABC transmembrane type-1 spans 19 to 209; sequence AKMTLWISVL…IITLVLSFIL (191 aa). Residues 23-43 form a helical membrane-spanning segment; sequence LWISVLGLAGGLVIGLLAGFA. The Cytoplasmic portion of the chain corresponds to 44-53; sequence RTFGGWIANH. The chain crosses the membrane as a helical span at residues 54–74; it reads VALVFIEVIRGTPIVVQVMFI. At 75–88 the chain is on the periplasmic side; that stretch reads YFALPMAFNDLRID. A helical transmembrane segment spans residues 89–109; it reads PFTAAVVTIMINSGAYIAEIT. Topologically, residues 110–150 are cytoplasmic; the sequence is RGAVLSIHKGFREAGLALGLSRWETIRYVILPLALRRMLPP. Residues 151–171 traverse the membrane as a helical segment; that stretch reads LGNQWIISIKDTSLFIVIGVA. The Periplasmic portion of the chain corresponds to 172 to 187; it reads ELTRQGQEIIAGNFRA. A helical membrane pass occupies residues 188–208; that stretch reads LEIWSAVAVFYLIITLVLSFI. Residues 209-219 lie on the Cytoplasmic side of the membrane; sequence LRRLERRMKIL.

The protein belongs to the binding-protein-dependent transport system permease family. HisMQ subfamily.

It localises to the cell inner membrane. Part of the binding-protein-dependent transport system for glutamine; probably responsible for the translocation of the substrate across the membrane. The chain is Glutamine transport system permease protein GlnP (glnP) from Escherichia coli O6:H1 (strain CFT073 / ATCC 700928 / UPEC).